Here is a 351-residue protein sequence, read N- to C-terminus: Heat-inducible transcription repressor HrcA (351 aa).

This sequence belongs to the HrcA family.

Negative regulator of class I heat shock genes (grpE-dnaK-dnaJ and groELS operons). Prevents heat-shock induction of these operons. This is Heat-inducible transcription repressor HrcA from Clostridium tetani (strain Massachusetts / E88).